We begin with the raw amino-acid sequence, 1220 residues long: MNRIFGRKKKDKDSDEKGSTESENDFLSSLPAKANKRYSMAYSSLQPDGNNSTNSKSADKFDDKGKAVDTPEFFVNTINLLPNIEILAQLCSSLQSKPSAWSKSLIDCNGIEALLNVLAFIERNGQKDSDVILQSLAVTCLLSLLNSKYGIEKAIATPNSMIRLITSMDTPKADTRSSVFEILTAICMISEKGYQLILEAMTHFKQVRKERFRFTFLVESMKKVMNSSDKEYLTTCLTLVNGIVNSSEEIDERIQLRTEFTRLGLDEVISVNKNIPYEEAPDLLTQIDVYEDEQRADQEELSERFEDLDIDINDPQVIFNEIYKQAKDRLHHPLLAILQSLLSISSDTEVGMLSWFLIEKLVLQISVNKPMIGDDDGKVSLEDLLASTAPSVALQSEFQKNIEELAKVKDQLKKANFDLNIANQELSSRSHESSVLKSNMFNTVKQKDQEIIKLRGQMKRIDSNFFSPPGGDGDDHINVINTPEESSPHHESPRKQQQQTSKPPLNPKSSKPPISSSQLKEKSKSNLSSSSSDSLSNDFKSQVEVAQQQQPQQQNIESTLTPEPTQIIKEEPIVTTPPPAPPAPPPPPMMGGGPPPPPPPPMMGGGGPPPPPPPPMMGGGPPPPPPMGGKGGPPPPPGGGGFGLFNSNKPPANAPKFTVSKPTTKVKQFQWTKIPNKKLGETIFTNLGTIKTDWLNVGEIENLFFAPEANSQKKLEASDKKSTSSTKPGTVSVIDPKKSQNLAIYLSKFKCPLEEIKTALYTLDEDIFTMESLKALEQYLPTDEDMEAIKDYLKKDGELKMLTKAEHFLLEMDSVSSLAERVKSFYLKILFPDKLKEIKPDLELFTKTIKDIKNSKNFLKVMEVVLIIGNFLNGGTARGDCFGFKLDALLKLADTKTANNKSNLLVYIISELEQKFPDSLKFMDDLSGVQECVKISMNTISADLNLLKKDLDAVNNGIGKMKRSKEESYFFSTMDDFIKDANIEIKIAFDQFQEAEKNFQELAVLFGEESKIPSEEFFVTINRFIVMFDKCYKDFQRDKEAAERAIKRDEAKAKKAQQLKRMNGKIASSTNNKNPLASSSTSVGDGGMVEDIMQSVRDGDAFKQRRRLKGTKENTDDSSSITTISEQSENSNTSSITITTPSGIELDITPSKSGSRREKKTSKSSDKDKEKEKEKEKQCESTESEDINKKDINVAAKALTIVMRSKQTMHSRIDTFNFDA.

A compositionally biased stretch (basic residues) spans 1-10 (MNRIFGRKKK). The tract at residues 1 to 62 (MNRIFGRKKK…TNSKSADKFD (62 aa)) is disordered. The region spanning 6 to 373 (GRKKKDKDSD…QISVNKPMIG (368 aa)) is the GBD/FH3 domain. The segment covering 11 to 20 (DKDSDEKGST) has biased composition (basic and acidic residues). Residues 41-56 (AYSSLQPDGNNSTNSK) are compositionally biased toward polar residues. A coiled-coil region spans residues 392 to 428 (VALQSEFQKNIEELAKVKDQLKKANFDLNIANQELSS). Disordered stretches follow at residues 461-659 (IDSN…KFTV), 711-732 (SQKKLEASDKKSTSSTKPGTVS), and 1049-1192 (DEAK…KKDI). Composition is skewed to low complexity over residues 501–518 (SKPPLNPKSSKPPISSSQ) and 525–554 (SNLSSSSSDSLSNDFKSQVEVAQQQQPQQQ). The 124-residue stretch at 532–655 (SDSLSNDFKS…NSNKPPANAP (124 aa)) folds into the FH1 domain. Over residues 555-564 (NIESTLTPEP) the composition is skewed to polar residues. Over residues 575 to 638 (TTPPPAPPAP…GKGGPPPPPG (64 aa)) the composition is skewed to pro residues. The FH2 domain occupies 656 to 1054 (KFTVSKPTTK…AIKRDEAKAK (399 aa)). A compositionally biased stretch (basic and acidic residues) spans 711–722 (SQKKLEASDKKS). Positions 1032 to 1062 (YKDFQRDKEAAERAIKRDEAKAKKAQQLKRM) form a coiled coil. Polar residues predominate over residues 1066-1083 (IASSTNNKNPLASSSTSV). The region spanning 1083-1158 (VGDGGMVEDI…TPSKSGSRRE (76 aa)) is the DAD domain. Residues 1117–1142 (DSSSITTISEQSENSNTSSITITTPS) show a composition bias toward low complexity. Basic and acidic residues predominate over residues 1161 to 1192 (TSKSSDKDKEKEKEKEKQCESTESEDINKKDI).

Belongs to the formin homology family. Diaphanous subfamily. In terms of assembly, interacts (via GBD/FH3 domain) with activated Rho-GTPases.

Formins play an important role in the nucleation of actin and the formation of linear actin filaments. In Dictyostelium discoideum (Social amoeba), this protein is Formin-F (forF).